A 356-amino-acid chain; its full sequence is MSQSGKNGLTYSDAGVDIDAGNLMVEKIKPHVRSTRRPGADGEIGGFGGLFDLKAAGFTDPVLVAANDGVGTKLKIAIDANKHDTVGIDLVAMCVNDLVVQGAEPLFFLDYFATGKLDPDQGAAIVAGIAAGCREAGCALIGGETAEMPGMYSGGDYDLAGFAVGAAERGQLLPAGGIAEGDVILGLASSGVHSNGYSLVRKIVSLSGLAWDAPAPFGEGTLADLLMTPTRIYVKPLLKAIRATGAIKALAHITGGGFPENIPRVLPKHLAAEIDLDAIKPPAVFSWLAKTGGVAANEMLRTFNCGVGMIAVVPAEEADRVAAVLAGEGETVFRLGRMVARQDGAPGTIYKGSLAL.

Belongs to the AIR synthase family.

Its subcellular location is the cytoplasm. The catalysed reaction is 2-formamido-N(1)-(5-O-phospho-beta-D-ribosyl)acetamidine + ATP = 5-amino-1-(5-phospho-beta-D-ribosyl)imidazole + ADP + phosphate + H(+). It functions in the pathway purine metabolism; IMP biosynthesis via de novo pathway; 5-amino-1-(5-phospho-D-ribosyl)imidazole from N(2)-formyl-N(1)-(5-phospho-D-ribosyl)glycinamide: step 2/2. This is Phosphoribosylformylglycinamidine cyclo-ligase from Sinorhizobium fredii (strain NBRC 101917 / NGR234).